Consider the following 503-residue polypeptide: MQVYLERARSRQQDFLYPLLFREYIYGLAYSHHLNRSIFVENVGYDNKYSLLIVKRLITRMYQQNHFIISANDSNKNAFWGYNKNFYSQIISEGFAIVVEIPFFLQLSSSLEEAEIIQYYKNLRSIHSIFPFLEDKMTYLNYVSDIRIPYPMHLEILVQILRYWVKDAPFFHFLRLFLYNFCNWNSFITTKKSISTFSKSNPRFFLFLYNFYVCEYESIFVFLRNKSSHLRLKSFSVFFERIFFYAKREHLVKVFSKDFSYTFTFFKDPYIHYVRYQGKCILASKNAPFLMNKWNHYFLHLWQCFFDVWSQPRMININPLSEHSFQLLGYFSNVRLNRSVVRSQMLQNTFLIEIVIKKLDIIVPIIPLIRSLAKAKFCNVLGQXISKPVWADSSDFDIIDRFLRICRSLSHYYNGSSKKKSLYRIKYILRFSCIKTLACKHKSTVRAFLKRSGSEELLQEFFTEEEDIFSLIFPRDSSTLQRLHRNRIWYLDILFSNDLVHDE.

It belongs to the intron maturase 2 family. MatK subfamily.

Its subcellular location is the plastid. It is found in the chloroplast. Functionally, usually encoded in the trnK tRNA gene intron. Probably assists in splicing its own and other chloroplast group II introns. In Vicia villosa (Hairy vetch), this protein is Maturase K.